Reading from the N-terminus, the 445-residue chain is Xylose isomerase (445 aa).

Catalysis depends on residues His-107 and Asp-110. The Mg(2+) site is built by Glu-238, Glu-274, His-277, Asp-302, Asp-313, Asp-315, and Asp-345.

Belongs to the xylose isomerase family. In terms of assembly, homotetramer. Requires Mg(2+) as cofactor.

Its subcellular location is the cytoplasm. It catalyses the reaction alpha-D-xylose = alpha-D-xylulofuranose. The protein is Xylose isomerase (xylA) of Priestia megaterium (strain DSM 319 / IMG 1521) (Bacillus megaterium).